The primary structure comprises 963 residues: Seizure 6-like protein (963 aa).

A signal peptide spans 1-31; sequence MPVARPQAAGPDRISLFLVAFLLGSPAAAQA. Disordered stretches follow at residues 28–63, 116–150, and 164–204; these read AAQAEDGGPEGEMHPSTAYLLPSASLESSLEEGVTS, RPLATPTTLQRLGSPASATTKLREPEDPEQPTAPA, and LPHS…TTTS. Residues 32-897 are Extracellular-facing; the sequence is EDGGPEGEMH…ESSLEGGNMA (866 aa). Positions 47 to 59 are enriched in low complexity; that stretch reads LLPSASLESSLEE. Residues 120–135 are compositionally biased toward polar residues; it reads TPTTLQRLGSPASATT. Positions 191-204 are enriched in low complexity; the sequence is TGSASEESQETTTS. A disulfide bond links cysteine 221 and cysteine 248. In terms of domain architecture, CUB 1 spans 221 to 329; sequence CGVSFSDPEG…GTFQLHYQAF (109 aa). 3 N-linked (GlcNAc...) asparagine glycosylation sites follow: asparagine 251, asparagine 268, and asparagine 290. Positions 331 to 390 constitute a Sushi 1 domain; sequence LSCPFPRRPDAGEVTVMDLHSGGVAHFHCHLGYELQGAKTLTCINASKPHWSSQEPVCSA. 3 cysteine pairs are disulfide-bonded: cysteine 333-cysteine 373, cysteine 359-cysteine 388, and cysteine 392-cysteine 419. N-linked (GlcNAc...) asparagine glycans are attached at residues asparagine 375, asparagine 398, asparagine 414, asparagine 454, asparagine 516, and asparagine 558. One can recognise a CUB 2 domain in the interval 392–502; it reads CGGAVHNATI…SAFNIRFEAF (111 aa). In terms of domain architecture, Sushi 2 spans 505 to 566; the sequence is GHCYEPYIQN…WNDTEPLCRA (62 aa). Disulfide bonds link cysteine 507-cysteine 549, cysteine 534-cysteine 564, and cysteine 568-cysteine 594. The CUB 3 domain occupies 568–679; that stretch reads CGGELSAVAG…QGFIMNYIEV (112 aa). Asparagine 614 and asparagine 682 each carry an N-linked (GlcNAc...) asparagine glycan. 3 Sushi domains span residues 683 to 742, 744 to 807, and 811 to 872; these read DSCS…FCEK, MYCT…HCVS, and LACD…ICKV. Cystine bridges form between cysteine 685–cysteine 727, cysteine 713–cysteine 740, cysteine 746–cysteine 788, cysteine 774–cysteine 805, cysteine 813–cysteine 855, and cysteine 841–cysteine 870. A helical membrane pass occupies residues 898 to 918; that stretch reads LAIFIPVLLISLLLGGAYIYV. Topologically, residues 919–963 are cytoplasmic; the sequence is TRCRQYSSLRLPLMYSHPYSQITVETEFDNPIYETGETREYEVSI.

This sequence belongs to the SEZ6 family. Expressed exclusively in the brain, predominantly in neurons. Wide expression in the gray matter of the brain with high levels in the olfactory bulb, anterior olfactory nuclei, hippocampal formation and cerebellar cortex. Detected diffusely and weakly in the white matter, such as the corpus callosum and cerebellar medulla. In the cerebellar cortex, intensely expressed in Purkinje cells and granule cells. Detected also in interneurons in the molecular layer.

Its subcellular location is the cell membrane. The protein resides in the endoplasmic reticulum membrane. Its function is as follows. Candidate tumor suppressor gene. May contribute to specialized endoplasmic reticulum functions in neurons. The protein is Seizure 6-like protein (Sez6l) of Mus musculus (Mouse).